The sequence spans 306 residues: Protein FdhE homolog (306 aa).

Belongs to the FdhE family.

It is found in the cytoplasm. In terms of biological role, necessary for formate dehydrogenase activity. The chain is Protein FdhE homolog from Proteus mirabilis (strain HI4320).